A 94-amino-acid polypeptide reads, in one-letter code: Alpha-conotoxin-like Vt20.1 (94 aa).

Positions Met-1–Ala-25 are cleaved as a signal peptide. Positions Val-26–Arg-44 are excised as a propeptide. 4-carboxyglutamate occurs at positions 47 and 49. 4 disulfide bridges follow: Cys-63/Cys-72, Cys-68/Cys-80, Cys-73/Cys-90, and Cys-78/Cys-92.

It belongs to the conotoxin D superfamily. Hetero-, homo- or pseudo-homodimer (identical sequence, different post-translational modifications). In terms of tissue distribution, expressed by the venom duct.

Its subcellular location is the secreted. Alpha-conotoxins act on postsynaptic membranes, they bind to the nicotinic acetylcholine receptors (nAChR) and thus inhibit them. Through its two C-terminal domains, this homodimeric protein would bind to two nAChR allosteric sites, located outside the nAChR C-loop of the principal binding face and at the adjacent binding interface in a clockwise direction. This toxin specifically blocks mammalian neuronal nAChR of the alpha-7/CHRNA7, alpha-3-beta-2/CHRNA3-CHRNB2 and alpha-4-beta-2/CHRNA4-CHRNB2 subtypes. The chain is Alpha-conotoxin-like Vt20.1 from Conus planorbis (Planorbis cone).